The following is a 327-amino-acid chain: UDP-glucose 4-epimerase (327 aa).

Thr119 is a substrate binding site. Residue Tyr143 is the Proton acceptor of the active site.

This sequence belongs to the NAD(P)-dependent epimerase/dehydratase family. It depends on NAD(+) as a cofactor.

The enzyme catalyses UDP-alpha-D-glucose = UDP-alpha-D-galactose. The protein operates within carbohydrate metabolism; galactose metabolism. It participates in glycan metabolism; exopolysaccharide biosynthesis. The sequence is that of UDP-glucose 4-epimerase (exoB) from Rhizobium leguminosarum bv. trifolii.